A 76-amino-acid polypeptide reads, in one-letter code: Translational regulator CsrA (76 aa).

This sequence belongs to the CsrA/RsmA family. As to quaternary structure, homodimer; the beta-strands of each monomer intercalate to form a hydrophobic core, while the alpha-helices form wings that extend away from the core.

It localises to the cytoplasm. A translational regulator that binds mRNA to regulate translation initiation and/or mRNA stability. Usually binds in the 5'-UTR at or near the Shine-Dalgarno sequence preventing ribosome-binding, thus repressing translation. Its main target seems to be the major flagellin gene, while its function is anatagonized by FliW. In Pseudothermotoga lettingae (strain ATCC BAA-301 / DSM 14385 / NBRC 107922 / TMO) (Thermotoga lettingae), this protein is Translational regulator CsrA.